We begin with the raw amino-acid sequence, 395 residues long: Sulfate adenylyltransferase (395 aa).

It belongs to the sulfate adenylyltransferase family.

The catalysed reaction is sulfate + ATP + H(+) = adenosine 5'-phosphosulfate + diphosphate. It functions in the pathway sulfur metabolism; hydrogen sulfide biosynthesis; sulfite from sulfate: step 1/3. The sequence is that of Sulfate adenylyltransferase from Synechococcus elongatus (strain ATCC 33912 / PCC 7942 / FACHB-805) (Anacystis nidulans R2).